Here is an 849-residue protein sequence, read N- to C-terminus: DNA mismatch repair protein MutS (849 aa).

An ATP-binding site is contributed by 665–672 (GPNMAGKS).

Belongs to the DNA mismatch repair MutS family.

In terms of biological role, this protein is involved in the repair of mismatches in DNA. It is possible that it carries out the mismatch recognition step. This protein has a weak ATPase activity. This Wolbachia pipientis wMel protein is DNA mismatch repair protein MutS.